The sequence spans 159 residues: MQKDDVAGRITAVAEQVLTPQGLELVEVEYKREGRQMVLRLFVDKPGGISLDDCAAVSRELSEILDVEDFIRENYTLEVSSPGLNRPLKKEADYERYAGRLVKVRTFELLADEEGNRRKTFLGDLVGLSDGVVTLTLREGQLARIPLDKIAKANLEFEF.

The protein belongs to the RimP family.

The protein resides in the cytoplasm. Functionally, required for maturation of 30S ribosomal subunits. The chain is Ribosome maturation factor RimP from Geobacter sulfurreducens (strain ATCC 51573 / DSM 12127 / PCA).